A 430-amino-acid chain; its full sequence is ATP-dependent RNA helicase cgh-1 (430 aa).

Residues 43–71 (VEFEDFCLGRDLLMGIFEKGWEKPSPIQE) carry the Q motif motif. The region spanning 74–244 (IGVALTGQDI…QKHMHKPYEI (171 aa)) is the Helicase ATP-binding domain. 87 to 94 (AKNGTGKT) serves as a coordination point for ATP. The short motif at 192–195 (DEAD) is the DEAD box element. Positions 254–414 (GVTQYYAFVQ…PIPKTVDPKL (161 aa)) constitute a Helicase C-terminal domain.

Belongs to the DEAD box helicase family. DDX6/DHH1 subfamily. As to quaternary structure, interacts with car-1 in a germline ribonucleoprotein complex. Interacts with ifet-1. Interacts with oma-1, which is a component of a ribonucleoprotein complex, in an RNA-dependent manner. Expression is restricted to two germline precursors Z2 and Z3 in L1 stage hermaphrodites, and is detectable specifically in the gonad at low levels into the L3 stage. Expression is significantly higher during the early L4 stage. In adults, expression remains gonad-specific and was not apparent in the somatically derived uterus. Expressed in germ granules (P granules); when associated with pgl-1.

It is found in the cytoplasm. It catalyses the reaction ATP + H2O = ADP + phosphate + H(+). Probable RNA helicase required for oocyte and sperm function. Also required to prevent the physiological germline apoptosis mechanism killing essentially all developing oocytes. The protein is ATP-dependent RNA helicase cgh-1 (cgh-1) of Caenorhabditis elegans.